The chain runs to 859 residues: Photoactivated adenylate cyclase subunit beta-like protein ST- (859 aa).

The 94-residue stretch at 56 to 149 folds into the BLUF 1 domain; sequence LRRLMYLSKS…GRMYGDWHMK (94 aa). A disordered region spans residues 420 to 444; it reads RPPIFDDTPKSNPRPRTPGYGGRQR. In terms of domain architecture, BLUF 2 spans 471–563; sequence LTTLTYISQA…RVYTSEWTLT (93 aa). A disordered region spans residues 814–859; the sequence is ARSGEQPLTEPEQAKPDFRVSPGRDRHGVSGRRSNSSQGKGSIQVG. The span at 825–841 shows a compositional bias: basic and acidic residues; it reads EQAKPDFRVSPGRDRHG. Residues 845–859 show a composition bias toward polar residues; sequence RRSNSSQGKGSIQVG.

Heterotetramer of two alpha and two beta subunits.

It localises to the cell projection. Its subcellular location is the cilium. It is found in the flagellum. In Euglena gracilis, this protein is Photoactivated adenylate cyclase subunit beta-like protein ST-.